The chain runs to 121 residues: Large ribosomal subunit protein bL12 (121 aa).

Belongs to the bacterial ribosomal protein bL12 family. Homodimer. Part of the ribosomal stalk of the 50S ribosomal subunit. Forms a multimeric L10(L12)X complex, where L10 forms an elongated spine to which 2 to 4 L12 dimers bind in a sequential fashion. Binds GTP-bound translation factors.

Its function is as follows. Forms part of the ribosomal stalk which helps the ribosome interact with GTP-bound translation factors. Is thus essential for accurate translation. The protein is Large ribosomal subunit protein bL12 of Clostridium perfringens (strain 13 / Type A).